A 382-amino-acid polypeptide reads, in one-letter code: 3-phytase (382 aa).

Positions 1–26 (MKVPKTMLLSTAAGLLLSLTATSVSA) are cleaved as a signal peptide. Residues 27–361 (HYVNEEHHFK…VSWEQIAQHL (335 aa)) form the BPP domain.

It localises to the secreted. It carries out the reaction 1D-myo-inositol hexakisphosphate + H2O = 1D-myo-inositol 1,2,4,5,6-pentakisphosphate + phosphate. This chain is 3-phytase (phy), found in Bacillus subtilis (strain 168).